The chain runs to 1593 residues: DNA-directed RNA polymerase subunit beta' (1593 aa).

Zn(2+) is bound by residues Cys-74, Cys-76, Cys-89, and Cys-92. Mg(2+) contacts are provided by Asp-648, Asp-650, and Asp-652. Zn(2+) contacts are provided by Cys-1026, Cys-1100, Cys-1107, and Cys-1110.

Belongs to the RNA polymerase beta' chain family. As to quaternary structure, the RNAP catalytic core consists of 2 alpha, 1 beta, 1 beta' and 1 omega subunit. When a sigma factor is associated with the core the holoenzyme is formed, which can initiate transcription. Mg(2+) is required as a cofactor. Zn(2+) serves as cofactor.

The enzyme catalyses RNA(n) + a ribonucleoside 5'-triphosphate = RNA(n+1) + diphosphate. In terms of biological role, DNA-dependent RNA polymerase catalyzes the transcription of DNA into RNA using the four ribonucleoside triphosphates as substrates. This chain is DNA-directed RNA polymerase subunit beta', found in Endomicrobium trichonymphae.